The chain runs to 593 residues: UvrABC system protein C (593 aa).

The GIY-YIG domain occupies T13–V91. Residues D202–I237 enclose the UVR domain.

The protein belongs to the UvrC family. Interacts with UvrB in an incision complex.

The protein localises to the cytoplasm. Functionally, the UvrABC repair system catalyzes the recognition and processing of DNA lesions. UvrC both incises the 5' and 3' sides of the lesion. The N-terminal half is responsible for the 3' incision and the C-terminal half is responsible for the 5' incision. The sequence is that of UvrABC system protein C from Caldicellulosiruptor saccharolyticus (strain ATCC 43494 / DSM 8903 / Tp8T 6331).